A 150-amino-acid chain; its full sequence is Macrodomain Ter protein (150 aa).

The protein belongs to the MatP family. Homodimer.

It is found in the cytoplasm. In terms of biological role, required for spatial organization of the terminus region of the chromosome (Ter macrodomain) during the cell cycle. Prevents early segregation of duplicated Ter macrodomains during cell division. Binds specifically to matS, which is a 13 bp signature motif repeated within the Ter macrodomain. In Citrobacter koseri (strain ATCC BAA-895 / CDC 4225-83 / SGSC4696), this protein is Macrodomain Ter protein.